Consider the following 332-residue polypeptide: uncharacterized protein (332 aa).

The first 32 residues, 1 to 32, serve as a signal peptide directing secretion; that stretch reads MSRDRGARGLRKYGRFALATGAATALSLTASG. Cys-33 carries the N-palmitoyl cysteine lipid modification. Cys-33 carries the S-diacylglycerol cysteine lipid modification.

Its subcellular location is the cell membrane. This is an uncharacterized protein from Streptomyces avermitilis (strain ATCC 31267 / DSM 46492 / JCM 5070 / NBRC 14893 / NCIMB 12804 / NRRL 8165 / MA-4680).